The chain runs to 149 residues: Transcriptional repressor NrdR (149 aa).

The segment at 3-34 (CPFCSATDTKVIDSRLVADGHQVRRRRECVQC) is a zinc-finger region. The 91-residue stretch at 49 to 139 (PRVVKQDGSR…VYRAFEDVSE (91 aa)) folds into the ATP-cone domain.

Belongs to the NrdR family. Requires Zn(2+) as cofactor.

Negatively regulates transcription of bacterial ribonucleotide reductase nrd genes and operons by binding to NrdR-boxes. This Shewanella piezotolerans (strain WP3 / JCM 13877) protein is Transcriptional repressor NrdR.